The following is a 230-amino-acid chain: Lipoprotein-releasing system ATP-binding protein LolD (230 aa).

The ABC transporter domain occupies 6–230 (LQASNLEKEY…GHFILPSETL (225 aa)). ATP is bound at residue 42 to 49 (GSSGSGKS).

Belongs to the ABC transporter superfamily. Lipoprotein translocase (TC 3.A.1.125) family. In terms of assembly, the complex is composed of two ATP-binding proteins (LolD) and two transmembrane proteins (LolC and LolE).

The protein resides in the cell inner membrane. In terms of biological role, part of the ABC transporter complex LolCDE involved in the translocation of mature outer membrane-directed lipoproteins, from the inner membrane to the periplasmic chaperone, LolA. Responsible for the formation of the LolA-lipoprotein complex in an ATP-dependent manner. The protein is Lipoprotein-releasing system ATP-binding protein LolD of Hydrogenovibrio crunogenus (strain DSM 25203 / XCL-2) (Thiomicrospira crunogena).